Reading from the N-terminus, the 206-residue chain is Max dimerization protein 3 (206 aa).

Residues 8–25 are interaction with SIN3A and SIN3B; it reads IQVLLQAAEFLERREREA. The bHLH domain occupies 57 to 109; sequence SGRHVHNELEKRRRAQLKRCLEQLRQQMPLGVDHTRYTTLSLLRGARMHIQKL.

As to quaternary structure, efficient DNA binding requires dimerization with another bHLH protein. Binds DNA as a heterodimer with MAX. Interacts with SIN3A AND SIN3B. Interacts with RNF17.

The protein localises to the nucleus. Transcriptional repressor. Binds with MAX to form a sequence-specific DNA-binding protein complex which recognizes the core sequence 5'-CAC[GA]TG-3'. Antagonizes MYC transcriptional activity by competing for MAX and suppresses MYC dependent cell transformation. The chain is Max dimerization protein 3 (Mxd3) from Rattus norvegicus (Rat).